A 144-amino-acid chain; its full sequence is Transcription antitermination protein NusB (144 aa).

It belongs to the NusB family.

In terms of biological role, involved in transcription antitermination. Required for transcription of ribosomal RNA (rRNA) genes. Binds specifically to the boxA antiterminator sequence of the ribosomal RNA (rrn) operons. This Blochmanniella pennsylvanica (strain BPEN) protein is Transcription antitermination protein NusB.